A 498-amino-acid polypeptide reads, in one-letter code: Germ cell-less protein-like 2 (498 aa).

Positions 33 to 39 (SRKRKRN) match the Nuclear localization signal motif. Positions 90–160 (SDIKIRALGR…LYTDADLSIT (71 aa)) constitute a BTB domain.

In terms of assembly, interacts with CUL3.

It is found in the nucleus matrix. The protein operates within protein modification; protein ubiquitination. Its function is as follows. Possible function in spermatogenesis. Probable substrate-specific adapter of an E3 ubiquitin-protein ligase complex which mediates the ubiquitination and subsequent proteasomal degradation of target proteins. In Mus musculus (Mouse), this protein is Germ cell-less protein-like 2 (Gmcl2).